Here is a 203-residue protein sequence, read N- to C-terminus: Urease accessory protein UreG (203 aa).

14 to 21 (GPVGSGKT) is a GTP binding site.

The protein belongs to the SIMIBI class G3E GTPase family. UreG subfamily. In terms of assembly, homodimer. UreD, UreF and UreG form a complex that acts as a GTP-hydrolysis-dependent molecular chaperone, activating the urease apoprotein by helping to assemble the nickel containing metallocenter of UreC. The UreE protein probably delivers the nickel.

The protein resides in the cytoplasm. Functionally, facilitates the functional incorporation of the urease nickel metallocenter. This process requires GTP hydrolysis, probably effectuated by UreG. This is Urease accessory protein UreG from Rhizobium leguminosarum bv. viciae.